We begin with the raw amino-acid sequence, 1235 residues long: ATP-dependent helicase/nuclease subunit A (1235 aa).

The UvrD-like helicase ATP-binding domain occupies 12–482; it reads ALWTDDQWKA…IDLSQNFRSR (471 aa). 33–40 provides a ligand contact to ATP; that stretch reads AAAGSGKT. The region spanning 509 to 800 is the UvrD-like helicase C-terminal domain; the sequence is AAELTLGASF…RMMTIHASKG (292 aa).

The protein belongs to the helicase family. AddA subfamily. In terms of assembly, heterodimer of AddA and AddB/RexB. It depends on Mg(2+) as a cofactor.

The enzyme catalyses Couples ATP hydrolysis with the unwinding of duplex DNA by translocating in the 3'-5' direction.. It carries out the reaction ATP + H2O = ADP + phosphate + H(+). The heterodimer acts as both an ATP-dependent DNA helicase and an ATP-dependent, dual-direction single-stranded exonuclease. Recognizes the chi site generating a DNA molecule suitable for the initiation of homologous recombination. The AddA nuclease domain is required for chi fragment generation; this subunit has the helicase and 3' -&gt; 5' nuclease activities. The protein is ATP-dependent helicase/nuclease subunit A of Listeria innocua serovar 6a (strain ATCC BAA-680 / CLIP 11262).